Reading from the N-terminus, the 298-residue chain is Protein Bel-1 (298 aa).

Over residues 1 to 17 the composition is skewed to basic and acidic residues; that stretch reads MASWEKEKELAHLHQPE. Positions 1–46 are disordered; it reads MASWEKEKELAHLHQPEDDPLPDLSLLLDMDQFEPTEGPDSNPGAE. Residues 91–200 mediate DNA binding; sequence SKWACARLIL…GEPLKPRVRA (110 aa). Positions 214–223 match the Nuclear localization signal motif; the sequence is ADRPKRSRWG. The segment at 225–298 is transactivation domain; the sequence is APREQPNTSS…SGPPTGPSEN (74 aa).

Homodimer or homomultimer. Forms complexes with the host nuclear factors NFIA, NFIB, NFIC or NFIX.

Its subcellular location is the host nucleus. Functionally, transcriptional transactivator that activates the viral internal promoter (IP), thereby enhancing its own expression. This transactivation is repressed by nuclear factor I. Also transactivates the long terminal repeat (LTR) promoter, thereby inducing structural gene expression, initiating the late phase of infection. It is therefore a key regulator of viral gene expression. It directly binds to and activates DNA target sites of viral promoters and those of distinct cellular genes. Required for viral replication. In Chlorocebus aethiops (Green monkey), this protein is Protein Bel-1 (bel1).